The primary structure comprises 101 residues: MATQKIRIRLKAYDYKLLDQSAGEIVETAKRTGAKVAGPIPLPTRINKFTVLRSPHVDKKSREQFEIRTHKRLLDILEPTPQTLDALMKLDLSAGVDVEIK.

This sequence belongs to the universal ribosomal protein uS10 family. Part of the 30S ribosomal subunit.

Functionally, involved in the binding of tRNA to the ribosomes. The chain is Small ribosomal subunit protein uS10 from Anaeromyxobacter dehalogenans (strain 2CP-C).